The chain runs to 152 residues: Transcriptional regulator MraZ (152 aa).

SpoVT-AbrB domains lie at 5–52 (VNQL…PLPE) and 81–124 (AQEL…DESL).

It belongs to the MraZ family. As to quaternary structure, forms oligomers.

The protein resides in the cytoplasm. Its subcellular location is the nucleoid. The protein is Transcriptional regulator MraZ of Halorhodospira halophila (strain DSM 244 / SL1) (Ectothiorhodospira halophila (strain DSM 244 / SL1)).